The primary structure comprises 202 residues: Thymidylate kinase (202 aa).

7-14 (GIDGSGKT) contributes to the ATP binding site.

The protein belongs to the thymidylate kinase family.

The catalysed reaction is dTMP + ATP = dTDP + ADP. Phosphorylation of dTMP to form dTDP in both de novo and salvage pathways of dTTP synthesis. This chain is Thymidylate kinase, found in Ehrlichia ruminantium (strain Gardel).